Consider the following 488-residue polypeptide: MQWEVVIGLETHTQLSTVSKIFSGASTAFGAAPNTQAAPVDLALPGVLPVLNKGAVERAIVFGLAIGAKIAPKSIFARKNYFYPDLPKGYQISQYEIPVVQGGTLTFQVEGKNGQPGYEKTVQLTRAHLEEDAGKSLHEDFAGMTGIDLNRAGTPLLEIVTEPDMRSAAEAVAYAKALHALVMWLGICDGNMQEGSFRCDANVSVRRGPDAPFGTRCEIKNLNSFRFLEEAINYEVRRQIELIEDGGTVVQETRLYDPDRKETRSMRSKEDAQDYRYFPDPDLLPLVIGDDWIERVRATLPELPAAMAARFESAYGLPKYDASILTATKATAAYFEAVVADAGAANAKAAANWIMGEVASNLNRADLDIDAAPVSPAQLAKLLARIADGTISNNTAKKDVFPAMWAGEHGGDADAIIAEKGLKQMSDSGELEKIIDDVLAANAKSVEEFRAGKEKAFNALVGQAMKATRGKANPAQVNDLLKKKLGAA.

The protein belongs to the GatB/GatE family. GatB subfamily. Heterotrimer of A, B and C subunits.

It catalyses the reaction L-glutamyl-tRNA(Gln) + L-glutamine + ATP + H2O = L-glutaminyl-tRNA(Gln) + L-glutamate + ADP + phosphate + H(+). The catalysed reaction is L-aspartyl-tRNA(Asn) + L-glutamine + ATP + H2O = L-asparaginyl-tRNA(Asn) + L-glutamate + ADP + phosphate + 2 H(+). Allows the formation of correctly charged Asn-tRNA(Asn) or Gln-tRNA(Gln) through the transamidation of misacylated Asp-tRNA(Asn) or Glu-tRNA(Gln) in organisms which lack either or both of asparaginyl-tRNA or glutaminyl-tRNA synthetases. The reaction takes place in the presence of glutamine and ATP through an activated phospho-Asp-tRNA(Asn) or phospho-Glu-tRNA(Gln). This is Aspartyl/glutamyl-tRNA(Asn/Gln) amidotransferase subunit B from Ralstonia pickettii (strain 12J).